The following is a 504-amino-acid chain: Probable cytosol aminopeptidase (504 aa).

Mn(2+)-binding residues include K274 and D279. K286 is an active-site residue. D297, D356, and E358 together coordinate Mn(2+). The active site involves R360.

Belongs to the peptidase M17 family. The cofactor is Mn(2+).

It is found in the cytoplasm. It catalyses the reaction Release of an N-terminal amino acid, Xaa-|-Yaa-, in which Xaa is preferably Leu, but may be other amino acids including Pro although not Arg or Lys, and Yaa may be Pro. Amino acid amides and methyl esters are also readily hydrolyzed, but rates on arylamides are exceedingly low.. The enzyme catalyses Release of an N-terminal amino acid, preferentially leucine, but not glutamic or aspartic acids.. In terms of biological role, presumably involved in the processing and regular turnover of intracellular proteins. Catalyzes the removal of unsubstituted N-terminal amino acids from various peptides. This is Probable cytosol aminopeptidase from Gloeobacter violaceus (strain ATCC 29082 / PCC 7421).